The following is a 448-amino-acid chain: Probable glycine dehydrogenase (decarboxylating) subunit 1 (448 aa).

This sequence belongs to the GcvP family. N-terminal subunit subfamily. As to quaternary structure, the glycine cleavage system is composed of four proteins: P, T, L and H. In this organism, the P 'protein' is a heterodimer of two subunits.

The enzyme catalyses N(6)-[(R)-lipoyl]-L-lysyl-[glycine-cleavage complex H protein] + glycine + H(+) = N(6)-[(R)-S(8)-aminomethyldihydrolipoyl]-L-lysyl-[glycine-cleavage complex H protein] + CO2. Functionally, the glycine cleavage system catalyzes the degradation of glycine. The P protein binds the alpha-amino group of glycine through its pyridoxal phosphate cofactor; CO(2) is released and the remaining methylamine moiety is then transferred to the lipoamide cofactor of the H protein. The chain is Probable glycine dehydrogenase (decarboxylating) subunit 1 from Geobacillus thermodenitrificans (strain NG80-2).